We begin with the raw amino-acid sequence, 626 residues long: Basic helix-loop-helix ARNT-like protein 1 (626 aa).

The segment at 1–60 (MADQRMDISSTISDFMSPGPTDLLSSSLGTSGVDCNRKRKGSSTDYQESMDTDKDDPHGR) is disordered. Residue serine 17 is modified to Phosphoserine; by GSK3-beta. Residues 17-32 (SPGPTDLLSSSLGTSG) are compositionally biased toward low complexity. Position 21 is a phosphothreonine; by GSK3-beta (threonine 21). The Nuclear localization signal motif lies at 36–41 (NRKRKG). The span at 51–60 (DTDKDDPHGR) shows a compositional bias: basic and acidic residues. The bHLH domain maps to 72 to 125 (NAREAHSQIEKRRRDKMNSFIDELASLVPTCNAMSRKLDKLTVLRMAVQHMKTL). Serine 78 bears the Phosphoserine mark. Residue serine 90 is modified to Phosphoserine; by CK2. The Nuclear export signal 1 motif lies at 142–152 (LSDDELKHLIL). The PAS 1 domain occupies 143-215 (SDDELKHLIL…EQLSSSDTAP (73 aa)). Lysine 252 is covalently cross-linked (Glycyl lysine isopeptide (Lys-Gly) (interchain with G-Cter in SUMO2 and SUMO3)). A Glycyl lysine isopeptide (Lys-Gly) (interchain with G-Cter in SUMO2) cross-link involves residue lysine 259. Residues 326 to 396 (PQPVNGEIRV…ECHRQVLQTR (71 aa)) form the PAS 2 domain. Residues 361 to 369 (LAYLPQELL) carry the Nuclear export signal 2 motif. A PAC domain is found at 401 to 444 (TNCYKFKIKDGSFITLRSRWFSFMNPWTKEVEYIVSTNTVVLAN). 2 disordered regions span residues 458–493 (ASPH…AGAG) and 511–595 (GSSP…SPSN). A compositionally biased stretch (gly residues) spans 484–493 (IPGGTRAGAG). Residues 508-588 (RIRGSSPSSC…IGIDMIDNDQ (81 aa)) are interaction with CIART. Residues 511-521 (GSSPSSCGSSP) are compositionally biased toward low complexity. Lysine 538 carries the N6-acetyllysine modification.

Component of the circadian clock oscillator which includes the CRY1/2 proteins, CLOCK or NPAS2,BMAL1 or BMAL2, CSNK1D and/or CSNK1E, TIMELESS and the PER1/2/3 proteins. Forms a heterodimer with CLOCK. The CLOCK-BMAL1 heterodimer is required for E-box-dependent transactivation, for CLOCK nuclear translocation and degradation, and, for phosphorylation of both CLOCK and BMAL1. Part of a nuclear complex which also includes RACK1 and PRKCA; RACK1 and PRKCA are recruited to the complex in a circadian manner. Interacts with NPAS2. Interacts with EZH2. Interacts with SUMO3. Interacts with SIRT1. Interacts with AHR. Interacts with ID1, ID2 and ID3. Interacts with DDX4. Interacts with OGT. Interacts with EED and SUZ12. Interacts with MTA1. Interacts with CIART. Interacts with HSP90. Interacts with KAT2B and EP300. Interacts with BHLHE40/DEC1 and BHLHE41/DEC2. Interacts with RELB and the interaction is enhanced in the presence of CLOCK. Interacts with PER1, PER2, CRY1 and CRY2 and this interaction requires a translocation to the nucleus. Interaction of the CLOCK-BMAL1 heterodimer with PER or CRY inhibits transcription activation. Interaction of the CLOCK-BMAL1 with CRY1 is independent of DNA but with PER2 is off DNA. The CLOCK-BMAL1 heterodimer interacts with GSK3B. Interacts with KDM5A. Interacts with KMT2A; in a circadian manner. Interacts with UBE3A. Interacts with PRKCG. Interacts with MAGEL2. Interacts with NCOA2. Interacts with THRAP3. The CLOCK-BMAL1 heterodimer interacts with PASD1. Interacts with PASD1. Interacts with USP9X. Interacts with PIWIL2 (via PIWI domain). Interacts with HDAC3. Interacts with HNF4A. Ubiquitinated, leading to its proteasomal degradation. Deubiquitinated by USP9X. In terms of processing, O-glycosylated; contains O-GlcNAc. O-glycosylation by OGT prevents protein degradation by inhibiting ubiquitination. It also stabilizes the CLOCK-BMAL1 heterodimer thereby increasing CLOCK-BMAL1-mediated transcription of genes in the negative loop of the circadian clock such as PER1/2/3 and CRY1/2. Post-translationally, acetylated on Lys-538 by CLOCK during the repression phase of the circadian cycle. Acetylation facilitates recruitment of CRY1 protein and initiates the repression phase of the circadian cycle. Acetylated at Lys-538 by KAT5 during the activation phase of the cycle, leading to recruitment of the positive transcription elongation factor b (P-TEFb) and BRD4, followed by productive elongation of circadian transcripts. Deacetylated by SIRT1, which may result in decreased protein stability. Phosphorylated upon dimerization with CLOCK. Phosphorylation enhances the transcriptional activity, alters the subcellular localization and decreases the stability of the CLOCK-BMAL1 heterodimer by promoting its degradation. Phosphorylation shows circadian variations in the liver with a peak between CT10 to CT14. Phosphorylation at Ser-90 by CK2 is essential for its nuclear localization, its interaction with CLOCK and controls CLOCK nuclear entry. Dephosphorylation at Ser-78 is important for dimerization with CLOCK and transcriptional activity. In terms of processing, sumoylated on Lys-259 upon dimerization with CLOCK. Predominantly conjugated to poly-SUMO2/3 rather than SUMO1 and the level of these conjugates undergo rhythmic variation, peaking at CT9-CT12. Sumoylation localizes it exclusively to the PML body and promotes its ubiquitination in the PML body, ubiquitin-dependent proteasomal degradation and the transcriptional activity of the CLOCK-BMAL1 heterodimer. Post-translationally, undergoes lysosome-mediated degradation in a time-dependent manner in the liver. Hair follicles (at protein level). Highly expressed in the adult brain, skeletal muscle and heart.

The protein localises to the nucleus. It localises to the cytoplasm. The protein resides in the PML body. Its activity is regulated as follows. There is conflicting data about the effect of NAD cofactors on activity. PubMed:11441146 suggests that the redox state of the cell can modulate the transcriptional activity of the CLOCK-BMAL1 heterodimer; NADH and NADPH enhance the DNA-binding activity of the heterodimer. PubMed:23229515 reports that NADH and NADPH have no significant effect on DNA-binding activity of the CLOCK-BMAL1 heterodimer. In terms of biological role, transcriptional activator which forms a core component of the circadian clock. The circadian clock, an internal time-keeping system, regulates various physiological processes through the generation of approximately 24 hour circadian rhythms in gene expression, which are translated into rhythms in metabolism and behavior. It is derived from the Latin roots 'circa' (about) and 'diem' (day) and acts as an important regulator of a wide array of physiological functions including metabolism, sleep, body temperature, blood pressure, endocrine, immune, cardiovascular, and renal function. Consists of two major components: the central clock, residing in the suprachiasmatic nucleus (SCN) of the brain, and the peripheral clocks that are present in nearly every tissue and organ system. Both the central and peripheral clocks can be reset by environmental cues, also known as Zeitgebers (German for 'timegivers'). The predominant Zeitgeber for the central clock is light, which is sensed by retina and signals directly to the SCN. The central clock entrains the peripheral clocks through neuronal and hormonal signals, body temperature and feeding-related cues, aligning all clocks with the external light/dark cycle. Circadian rhythms allow an organism to achieve temporal homeostasis with its environment at the molecular level by regulating gene expression to create a peak of protein expression once every 24 hours to control when a particular physiological process is most active with respect to the solar day. Transcription and translation of core clock components (CLOCK, NPAS2, BMAL1, BMAL2, PER1, PER2, PER3, CRY1 and CRY2) plays a critical role in rhythm generation, whereas delays imposed by post-translational modifications (PTMs) are important for determining the period (tau) of the rhythms (tau refers to the period of a rhythm and is the length, in time, of one complete cycle). A diurnal rhythm is synchronized with the day/night cycle, while the ultradian and infradian rhythms have a period shorter and longer than 24 hours, respectively. Disruptions in the circadian rhythms contribute to the pathology of cardiovascular diseases, cancer, metabolic syndromes and aging. A transcription/translation feedback loop (TTFL) forms the core of the molecular circadian clock mechanism. Transcription factors, CLOCK or NPAS2 and BMAL1 or BMAL2, form the positive limb of the feedback loop, act in the form of a heterodimer and activate the transcription of core clock genes and clock-controlled genes (involved in key metabolic processes), harboring E-box elements (5'-CACGTG-3') within their promoters. The core clock genes: PER1/2/3 and CRY1/2 which are transcriptional repressors form the negative limb of the feedback loop and interact with the CLOCK|NPAS2-BMAL1|BMAL2 heterodimer inhibiting its activity and thereby negatively regulating their own expression. This heterodimer also activates nuclear receptors NR1D1/2 and RORA/B/G, which form a second feedback loop and which activate and repress BMAL1 transcription, respectively. BMAL1 positively regulates myogenesis and negatively regulates adipogenesis via the transcriptional control of the genes of the canonical Wnt signaling pathway. Plays a role in normal pancreatic beta-cell function; regulates glucose-stimulated insulin secretion via the regulation of antioxidant genes NFE2L2/NRF2 and its targets SESN2, PRDX3, CCLC and CCLM. Negatively regulates the mTORC1 signaling pathway; regulates the expression of MTOR and DEPTOR. Controls diurnal oscillations of Ly6C inflammatory monocytes; rhythmic recruitment of the PRC2 complex imparts diurnal variation to chemokine expression that is necessary to sustain Ly6C monocyte rhythms. Regulates the expression of HSD3B2, STAR, PTGS2, CYP11A1, CYP19A1 and LHCGR in the ovary and also the genes involved in hair growth. Plays an important role in adult hippocampal neurogenesis by regulating the timely entry of neural stem/progenitor cells (NSPCs) into the cell cycle and the number of cell divisions that take place prior to cell-cycle exit. Regulates the circadian expression of CIART and KLF11. The CLOCK-BMAL1 heterodimer regulates the circadian expression of SERPINE1/PAI1, VWF, B3, CCRN4L/NOC, NAMPT, DBP, MYOD1, PPARGC1A, PPARGC1B, SIRT1, GYS2, F7, NGFR, GNRHR, BHLHE40/DEC1, ATF4, MTA1, KLF10 and also genes implicated in glucose and lipid metabolism. Promotes rhythmic chromatin opening, regulating the DNA accessibility of other transcription factors. The NPAS2-BMAL1 heterodimer positively regulates the expression of MAOA, F7 and LDHA and modulates the circadian rhythm of daytime contrast sensitivity by regulating the rhythmic expression of adenylate cyclase type 1 (ADCY1) in the retina. The preferred binding motif for the CLOCK-BMAL1 heterodimer is 5'-CACGTGA-3', which contains a flanking adenine nucleotide at the 3-prime end of the canonical 6-nucleotide E-box sequence. CLOCK specifically binds to the half-site 5'-CAC-3', while BMAL1 binds to the half-site 5'-GTGA-3'. The CLOCK-BMAL1 heterodimer also recognizes the non-canonical E-box motifs 5'-AACGTGA-3' and 5'-CATGTGA-3'. Essential for the rhythmic interaction of CLOCK with ASS1 and plays a critical role in positively regulating CLOCK-mediated acetylation of ASS1. Plays a role in protecting against lethal sepsis by limiting the expression of immune checkpoint protein CD274 in macrophages in a PKM2-dependent manner. Regulates the diurnal rhythms of skeletal muscle metabolism via transcriptional activation of genes promoting triglyceride synthesis (DGAT2) and metabolic efficiency (COQ10B). (Microbial infection) Regulates SARS coronavirus-2/SARS-CoV-2 entry and replication in lung epithelial cells probably through the post-transcriptional regulation of ACE2 and interferon-stimulated gene expression. This is Basic helix-loop-helix ARNT-like protein 1 from Homo sapiens (Human).